A 154-amino-acid polypeptide reads, in one-letter code: Protein MGF 300-2R (154 aa).

The protein belongs to the asfivirus MGF 300 family.

Its function is as follows. Plays a role in virus cell tropism, and may be required for efficient virus replication in macrophages. This is Protein MGF 300-2R from Ornithodoros (relapsing fever ticks).